A 95-amino-acid chain; its full sequence is MSVTKETVQHVANLARLQFNEEETERFSGQISRIVDLMDALSKLPTEGVKPMSHAVDMAIPQRDDVVTNGNQRDTMLANAPDAEKGHFRVPKVIE.

Belongs to the GatC family. As to quaternary structure, heterotrimer of A, B and C subunits.

It catalyses the reaction L-glutamyl-tRNA(Gln) + L-glutamine + ATP + H2O = L-glutaminyl-tRNA(Gln) + L-glutamate + ADP + phosphate + H(+). The enzyme catalyses L-aspartyl-tRNA(Asn) + L-glutamine + ATP + H2O = L-asparaginyl-tRNA(Asn) + L-glutamate + ADP + phosphate + 2 H(+). Its function is as follows. Allows the formation of correctly charged Asn-tRNA(Asn) or Gln-tRNA(Gln) through the transamidation of misacylated Asp-tRNA(Asn) or Glu-tRNA(Gln) in organisms which lack either or both of asparaginyl-tRNA or glutaminyl-tRNA synthetases. The reaction takes place in the presence of glutamine and ATP through an activated phospho-Asp-tRNA(Asn) or phospho-Glu-tRNA(Gln). This chain is Aspartyl/glutamyl-tRNA(Asn/Gln) amidotransferase subunit C, found in Magnetococcus marinus (strain ATCC BAA-1437 / JCM 17883 / MC-1).